The following is a 264-amino-acid chain: S-adenosylmethionine decarboxylase proenzyme (264 aa).

S113 functions as the Schiff-base intermediate with substrate; via pyruvic acid in the catalytic mechanism. S113 is modified (pyruvic acid (Ser); by autocatalysis). Catalysis depends on H118, which acts as the Proton acceptor; for processing activity. Residue C141 is the Proton donor; for catalytic activity of the active site.

It belongs to the prokaryotic AdoMetDC family. Type 2 subfamily. As to quaternary structure, heterooctamer of four alpha and four beta chains arranged as a tetramer of alpha/beta heterodimers. It depends on pyruvate as a cofactor. Is synthesized initially as an inactive proenzyme. Formation of the active enzyme involves a self-maturation process in which the active site pyruvoyl group is generated from an internal serine residue via an autocatalytic post-translational modification. Two non-identical subunits are generated from the proenzyme in this reaction, and the pyruvate is formed at the N-terminus of the alpha chain, which is derived from the carboxyl end of the proenzyme. The post-translation cleavage follows an unusual pathway, termed non-hydrolytic serinolysis, in which the side chain hydroxyl group of the serine supplies its oxygen atom to form the C-terminus of the beta chain, while the remainder of the serine residue undergoes an oxidative deamination to produce ammonia and the pyruvoyl group blocking the N-terminus of the alpha chain.

The catalysed reaction is S-adenosyl-L-methionine + H(+) = S-adenosyl 3-(methylsulfanyl)propylamine + CO2. It functions in the pathway amine and polyamine biosynthesis; S-adenosylmethioninamine biosynthesis; S-adenosylmethioninamine from S-adenosyl-L-methionine: step 1/1. In terms of biological role, catalyzes the decarboxylation of S-adenosylmethionine to S-adenosylmethioninamine (dcAdoMet), the propylamine donor required for the synthesis of the polyamines spermine and spermidine from the diamine putrescine. This Xanthomonas euvesicatoria pv. vesicatoria (strain 85-10) (Xanthomonas campestris pv. vesicatoria) protein is S-adenosylmethionine decarboxylase proenzyme.